Reading from the N-terminus, the 628-residue chain is DNA mismatch repair protein MutL (628 aa).

Residues S335 to P411 are disordered. A compositionally biased stretch (polar residues) spans E343–T353.

Belongs to the DNA mismatch repair MutL/HexB family.

Its function is as follows. This protein is involved in the repair of mismatches in DNA. It is required for dam-dependent methyl-directed DNA mismatch repair. May act as a 'molecular matchmaker', a protein that promotes the formation of a stable complex between two or more DNA-binding proteins in an ATP-dependent manner without itself being part of a final effector complex. This Shewanella pealeana (strain ATCC 700345 / ANG-SQ1) protein is DNA mismatch repair protein MutL.